The sequence spans 319 residues: 33 kDa chaperonin (319 aa).

Intrachain disulfides connect cysteine 239/cysteine 241 and cysteine 272/cysteine 275. A disordered region spans residues 300 to 319 (EVSEEMKKAEEKEKEEKNKK).

Belongs to the HSP33 family. Post-translationally, under oxidizing conditions two disulfide bonds are formed involving the reactive cysteines. Under reducing conditions zinc is bound to the reactive cysteines and the protein is inactive.

The protein resides in the cytoplasm. Redox regulated molecular chaperone. Protects both thermally unfolding and oxidatively damaged proteins from irreversible aggregation. Plays an important role in the bacterial defense system toward oxidative stress. In Clostridium perfringens (strain ATCC 13124 / DSM 756 / JCM 1290 / NCIMB 6125 / NCTC 8237 / Type A), this protein is 33 kDa chaperonin.